A 468-amino-acid chain; its full sequence is Acid phosphatase PHO1 (468 aa).

Positions 1-22 (MFSPILSLEIILALATLQSVFA) are cleaved as a signal peptide. Histidine 84 (nucleophile) is an active-site residue. N-linked (GlcNAc...) asparagine glycosylation is found at asparagine 163, asparagine 196, asparagine 256, and asparagine 321. Aspartate 346 serves as the catalytic Proton donor. N-linked (GlcNAc...) asparagine glycosylation is found at asparagine 360 and asparagine 453.

Belongs to the histidine acid phosphatase family.

The enzyme catalyses a phosphate monoester + H2O = an alcohol + phosphate. This is Acid phosphatase PHO1 (PHO1) from Komagataella pastoris (Yeast).